Reading from the N-terminus, the 480-residue chain is Zinc metalloproteinase/disintegrin (480 aa).

An N-terminal signal peptide occupies residues 1–20; the sequence is MIQVLLITICLAVFPFQGSS. A propeptide spanning residues 21–190 is cleaved from the precursor; that stretch reads IVLDSGNLNE…KASQLNVSPD (170 aa). Residues 197-391 enclose the Peptidase M12B domain; sequence RFIKLAIYVD…HSPQCILNDP (195 aa). N-linked (GlcNAc...) asparagine glycans are attached at residues Asn259 and Asn279. Intrachain disulfides connect Cys308/Cys386, Cys348/Cys370, Cys350/Cys353, Cys413/Cys428, Cys415/Cys423, Cys422/Cys445, Cys436/Cys442, Cys441/Cys466, and Cys454/Cys473. A Zn(2+)-binding site is contributed by His333. The active site involves Glu334. Zn(2+)-binding residues include His337 and His343. The region spanning 399–480 is the Disintegrin domain; that stretch reads TPVSGNELLE…AGCPRNPFHA (82 aa). The Cell attachment site signature appears at 458–460; sequence RGD.

This sequence belongs to the venom metalloproteinase (M12B) family. P-II subfamily. P-IIa sub-subfamily. In terms of assembly, monomer. It depends on Zn(2+) as a cofactor. In terms of tissue distribution, expressed by the venom gland.

It localises to the secreted. In terms of biological role, impairs hemostasis in the envenomed animal. Functionally, inhibits platelet aggregation and bone resorption. In Gloydius halys (Chinese water mocassin), this protein is Zinc metalloproteinase/disintegrin.